The primary structure comprises 285 residues: Heme oxygenase 3, chloroplastic (285 aa).

The transit peptide at 1–58 (MATTRLNPSCHFPASTRLSCESYLGLRTTGRISYARTLTAPRGYLAVKANGGQASVVT) directs the protein to the chloroplast. His89 contributes to the heme b binding site. Residues 89–105 (HTKDQAREGEKESRSPE) are compositionally biased toward basic and acidic residues. Positions 89-109 (HTKDQAREGEKESRSPEEGPV) are disordered.

This sequence belongs to the heme oxygenase family. As to expression, widely expressed at low levels.

Its subcellular location is the plastid. It localises to the chloroplast. It catalyses the reaction heme b + 3 reduced [NADPH--hemoprotein reductase] + 3 O2 = biliverdin IXalpha + CO + Fe(2+) + 3 oxidized [NADPH--hemoprotein reductase] + 3 H2O + H(+). Its function is as follows. Catalyzes the opening of the heme ring to form the open-chain tetrapyrrole biliverdin IX with the release of iron and carbon monoxide (CO). Produces specifically the biliverdin IX-alpha isomer. Plays a minor role in phytochrome assembly and photomorphogenesis. This is Heme oxygenase 3, chloroplastic (HO3) from Arabidopsis thaliana (Mouse-ear cress).